Here is an 80-residue protein sequence, read N- to C-terminus: Acyl carrier protein (80 aa).

Residues 4–79 (EAILEKVRSI…DAVKYIEDKQ (76 aa)) enclose the Carrier domain. The residue at position 39 (Ser-39) is an O-(pantetheine 4'-phosphoryl)serine.

The protein belongs to the acyl carrier protein (ACP) family. Post-translationally, 4'-phosphopantetheine is transferred from CoA to a specific serine of apo-ACP by AcpS. This modification is essential for activity because fatty acids are bound in thioester linkage to the sulfhydryl of the prosthetic group.

The protein resides in the cytoplasm. Its pathway is lipid metabolism; fatty acid biosynthesis. In terms of biological role, carrier of the growing fatty acid chain in fatty acid biosynthesis. The protein is Acyl carrier protein of Prochlorococcus marinus (strain SARG / CCMP1375 / SS120).